The chain runs to 308 residues: Glutaminase (308 aa).

Ser-66, Asn-117, Glu-161, Asn-168, Tyr-192, Tyr-244, and Val-262 together coordinate substrate.

It belongs to the glutaminase family. Homotetramer.

The enzyme catalyses L-glutamine + H2O = L-glutamate + NH4(+). This Salmonella heidelberg (strain SL476) protein is Glutaminase.